A 338-amino-acid polypeptide reads, in one-letter code: RNA 3'-terminal phosphate cyclase (338 aa).

Residues glutamine 103 and 283-287 (YLADQ) each bind ATP. Histidine 308 serves as the catalytic Tele-AMP-histidine intermediate.

Belongs to the RNA 3'-terminal cyclase family. Type 1 subfamily.

It is found in the cytoplasm. The catalysed reaction is a 3'-end 3'-phospho-ribonucleotide-RNA + ATP = a 3'-end 2',3'-cyclophospho-ribonucleotide-RNA + AMP + diphosphate. In terms of biological role, catalyzes the conversion of 3'-phosphate to a 2',3'-cyclic phosphodiester at the end of RNA. The mechanism of action of the enzyme occurs in 3 steps: (A) adenylation of the enzyme by ATP; (B) transfer of adenylate to an RNA-N3'P to produce RNA-N3'PP5'A; (C) and attack of the adjacent 2'-hydroxyl on the 3'-phosphorus in the diester linkage to produce the cyclic end product. The biological role of this enzyme is unknown but it is likely to function in some aspects of cellular RNA processing. In Escherichia coli O9:H4 (strain HS), this protein is RNA 3'-terminal phosphate cyclase.